Consider the following 367-residue polypeptide: Phosphoglycerate kinase (367 aa).

(2R)-3-phosphoglycerate contacts are provided by Val1, Asp2, Phe3, Asn4, Arg17, Ser40, His41, Gly43, Arg44, Leu98, Arg99, His146, and Arg147. An ADP-binding site is contributed by Gly190. Gly190 contacts CDP. Residues Ala191 and Lys192 each contribute to the AMP site. Ala191 is a binding site for ATP. Ala191 lines the Mg(2+) pocket. Mg(2+) contacts are provided by Ala194 and Asp195. Position 195 (Asp195) interacts with CDP. Residue Lys196 participates in AMP binding. Lys196 provides a ligand contact to ATP. Gly214 contributes to the ADP binding site. Gly214 is a binding site for CDP. Positions 215 and 289 each coordinate AMP. Residues Gly215 and Gly289 each coordinate ATP. CDP is bound by residues Gly314 and Phe319. Position 319 (Phe319) interacts with ADP. Glu320 is an AMP binding site. Glu320, Asp351, and Thr352 together coordinate ATP. Mg(2+) is bound at residue Asp351.

This sequence belongs to the phosphoglycerate kinase family. As to quaternary structure, monomer. It depends on Mg(2+) as a cofactor.

It catalyses the reaction (2R)-3-phosphoglycerate + ATP = (2R)-3-phospho-glyceroyl phosphate + ADP. Its pathway is carbohydrate degradation; glycolysis; pyruvate from D-glyceraldehyde 3-phosphate: step 2/5. The polypeptide is Phosphoglycerate kinase (PGK) (Paramecium primaurelia).